The following is a 433-amino-acid chain: ATP-dependent protease ATPase subunit HslU (433 aa).

Residues Val-18, 60 to 65 (GVGKTE), Asp-246, Glu-311, and Arg-383 each bind ATP.

Belongs to the ClpX chaperone family. HslU subfamily. In terms of assembly, a double ring-shaped homohexamer of HslV is capped on each side by a ring-shaped HslU homohexamer. The assembly of the HslU/HslV complex is dependent on binding of ATP.

It localises to the cytoplasm. ATPase subunit of a proteasome-like degradation complex; this subunit has chaperone activity. The binding of ATP and its subsequent hydrolysis by HslU are essential for unfolding of protein substrates subsequently hydrolyzed by HslV. HslU recognizes the N-terminal part of its protein substrates and unfolds these before they are guided to HslV for hydrolysis. The polypeptide is ATP-dependent protease ATPase subunit HslU (Nitrobacter hamburgensis (strain DSM 10229 / NCIMB 13809 / X14)).